A 318-amino-acid chain; its full sequence is Death effector domain-containing protein (318 aa).

Positions 25–103 (SLHRMFDIVG…RHDLLPYVTL (79 aa)) constitute a DED domain. Residues 128-191 (PRALSDPEPR…SVTPDPKEKQ (64 aa)) form a disordered region.

As to quaternary structure, interacts with CASP8, CASP10, KRT8, KRT18, CASP3 and FADD. Homodimerizes and heterodimerizes with DEDD2. Exists predominantly in a mono- or diubiquitinated form. As to expression, ubiquitously expressed.

It localises to the cytoplasm. The protein resides in the nucleus. It is found in the nucleolus. In terms of biological role, a scaffold protein that directs CASP3 to certain substrates and facilitates their ordered degradation during apoptosis. May also play a role in mediating CASP3 cleavage of KRT18. Regulates degradation of intermediate filaments during apoptosis. May play a role in the general transcription machinery in the nucleus and might be an important regulator of the activity of GTF3C3. Inhibits DNA transcription in vitro. This Mus musculus (Mouse) protein is Death effector domain-containing protein (Dedd).